Here is a 555-residue protein sequence, read N- to C-terminus: Pentatricopeptide repeat-containing protein At2g44880 (555 aa).

PPR repeat units follow at residues 41 to 75, 77 to 111, 112 to 142, 143 to 173, 175 to 205, 206 to 240, 241 to 267, 273 to 307, 308 to 342, 343 to 370, 373 to 407, and 408 to 438; these read DSFL…TCFA, DNFT…GFCA, DMYV…MPHR, SEVS…MPHV, DVVI…MTHK, TVIT…NLVS, WNTM…MQAT, DDVT…KLDK, KVKV…QVAS, WNAM…MIEE, DEIT…GLNA, and KIEH…MPFE. Residues 443 to 518 are type E motif; that stretch reads ILSSFLSACG…EVGCSLIEIN (76 aa). Positions 519-549 are type E(+) motif; sequence YIVSEFISGDTTHPHRRSIHLVLGDLLMHMN.

This sequence belongs to the PPR family. PCMP-E subfamily.

This Arabidopsis thaliana (Mouse-ear cress) protein is Pentatricopeptide repeat-containing protein At2g44880 (PCMP-E9).